Consider the following 180-residue polypeptide: uncharacterized protein (180 aa).

Residues 1–24 (MKKKTIFQCVILFFSILNIHVGMA) form the signal peptide.

In terms of biological role, part of the elfADCG-ycbUVF fimbrial operon, which promotes adhesion of bacteria to different abiotic surfaces. This is an uncharacterized protein from Escherichia coli (strain K12).